We begin with the raw amino-acid sequence, 932 residues long: Protein translocase subunit SecA (932 aa).

Residues Gln-87, 105 to 109, and Asp-515 contribute to the ATP site; that span reads GEGKT. Cys-916, Cys-918, Cys-927, and His-928 together coordinate Zn(2+).

This sequence belongs to the SecA family. In terms of assembly, monomer and homodimer. Part of the essential Sec protein translocation apparatus which comprises SecA, SecYEG and auxiliary proteins SecDF-YajC and YidC. The cofactor is Zn(2+).

The protein resides in the cell inner membrane. It is found in the cytoplasm. It catalyses the reaction ATP + H2O + cellular proteinSide 1 = ADP + phosphate + cellular proteinSide 2.. Part of the Sec protein translocase complex. Interacts with the SecYEG preprotein conducting channel. Has a central role in coupling the hydrolysis of ATP to the transfer of proteins into and across the cell membrane, serving both as a receptor for the preprotein-SecB complex and as an ATP-driven molecular motor driving the stepwise translocation of polypeptide chains across the membrane. In Burkholderia multivorans (strain ATCC 17616 / 249), this protein is Protein translocase subunit SecA.